We begin with the raw amino-acid sequence, 787 residues long: Endonuclease MutS2 (787 aa).

Position 334 to 341 (334 to 341 (GPNTGGKT)) interacts with ATP. The tract at residues 685–709 (KAQDPAKSAKQPRASVKRSGSSGMS) is disordered. One can recognise a Smr domain in the interval 712–787 (LDLRGHRYEE…GDGSTVVHFK (76 aa)).

This sequence belongs to the DNA mismatch repair MutS family. MutS2 subfamily. In terms of assembly, homodimer. Binds to stalled ribosomes, contacting rRNA.

Functionally, endonuclease that is involved in the suppression of homologous recombination and thus may have a key role in the control of bacterial genetic diversity. Acts as a ribosome collision sensor, splitting the ribosome into its 2 subunits. Detects stalled/collided 70S ribosomes which it binds and splits by an ATP-hydrolysis driven conformational change. Acts upstream of the ribosome quality control system (RQC), a ribosome-associated complex that mediates the extraction of incompletely synthesized nascent chains from stalled ribosomes and their subsequent degradation. Probably generates substrates for RQC. This Levilactobacillus brevis (strain ATCC 367 / BCRC 12310 / CIP 105137 / JCM 1170 / LMG 11437 / NCIMB 947 / NCTC 947) (Lactobacillus brevis) protein is Endonuclease MutS2.